We begin with the raw amino-acid sequence, 116 residues long: Large ribosomal subunit protein bL19 (116 aa).

Belongs to the bacterial ribosomal protein bL19 family.

Functionally, this protein is located at the 30S-50S ribosomal subunit interface and may play a role in the structure and function of the aminoacyl-tRNA binding site. This Actinobacillus pleuropneumoniae serotype 5b (strain L20) protein is Large ribosomal subunit protein bL19.